The following is a 276-amino-acid chain: Large ribosomal subunit protein uL2 (276 aa).

Disordered stretches follow at residues 29-54 (PEKS…SRRR) and 224-276 (AMNP…RGQR). The segment covering 256 to 276 (YKTRSKKKPSSKLIVKRRGQR) has biased composition (basic residues).

Belongs to the universal ribosomal protein uL2 family. As to quaternary structure, part of the 50S ribosomal subunit. Forms a bridge to the 30S subunit in the 70S ribosome.

One of the primary rRNA binding proteins. Required for association of the 30S and 50S subunits to form the 70S ribosome, for tRNA binding and peptide bond formation. It has been suggested to have peptidyltransferase activity; this is somewhat controversial. Makes several contacts with the 16S rRNA in the 70S ribosome. This is Large ribosomal subunit protein uL2 from Maridesulfovibrio salexigens (strain ATCC 14822 / DSM 2638 / NCIMB 8403 / VKM B-1763) (Desulfovibrio salexigens).